Here is a 455-residue protein sequence, read N- to C-terminus: 3-phosphoshikimate 1-carboxyvinyltransferase (455 aa).

A disordered region spans residues Met-1–Arg-23. The 3-phosphoshikimate site is built by Lys-28, Ser-29, and Arg-33. Lys-28 serves as a coordination point for phosphoenolpyruvate. Positions 100 and 128 each coordinate phosphoenolpyruvate. The 3-phosphoshikimate site is built by Ser-173, Gln-175, Asp-326, and Lys-353. Residue Gln-175 participates in phosphoenolpyruvate binding. Catalysis depends on Asp-326, which acts as the Proton acceptor. Arg-357 and Arg-405 together coordinate phosphoenolpyruvate.

The protein belongs to the EPSP synthase family. As to quaternary structure, monomer.

The protein resides in the cytoplasm. It carries out the reaction 3-phosphoshikimate + phosphoenolpyruvate = 5-O-(1-carboxyvinyl)-3-phosphoshikimate + phosphate. Its pathway is metabolic intermediate biosynthesis; chorismate biosynthesis; chorismate from D-erythrose 4-phosphate and phosphoenolpyruvate: step 6/7. Its function is as follows. Catalyzes the transfer of the enolpyruvyl moiety of phosphoenolpyruvate (PEP) to the 5-hydroxyl of shikimate-3-phosphate (S3P) to produce enolpyruvyl shikimate-3-phosphate and inorganic phosphate. The chain is 3-phosphoshikimate 1-carboxyvinyltransferase from Rhizobium meliloti (strain 1021) (Ensifer meliloti).